The sequence spans 200 residues: 3-isopropylmalate dehydratase small subunit (200 aa).

This sequence belongs to the LeuD family. LeuD type 1 subfamily. Heterodimer of LeuC and LeuD.

It catalyses the reaction (2R,3S)-3-isopropylmalate = (2S)-2-isopropylmalate. The protein operates within amino-acid biosynthesis; L-leucine biosynthesis; L-leucine from 3-methyl-2-oxobutanoate: step 2/4. Its function is as follows. Catalyzes the isomerization between 2-isopropylmalate and 3-isopropylmalate, via the formation of 2-isopropylmaleate. The chain is 3-isopropylmalate dehydratase small subunit from Campylobacter jejuni (strain RM1221).